Reading from the N-terminus, the 556-residue chain is Arginine--tRNA ligase (556 aa).

A 'HIGH' region motif is present at residues 132–142 (ANPTGDLHLGH).

It belongs to the class-I aminoacyl-tRNA synthetase family. Monomer.

Its subcellular location is the cytoplasm. It carries out the reaction tRNA(Arg) + L-arginine + ATP = L-arginyl-tRNA(Arg) + AMP + diphosphate. The polypeptide is Arginine--tRNA ligase (Listeria monocytogenes serotype 4b (strain F2365)).